A 520-amino-acid polypeptide reads, in one-letter code: Amine oxidase [flavin-containing] B (520 aa).

S2 carries the post-translational modification N-acetylserine. At 2–489 the chain is on the cytoplasmic side; it reads SNKSDVIVVG…TFLERHLPSV (488 aa). K52 and K248 each carry N6-acetyllysine. S-8alpha-FAD cysteine is present on C397. Residues 490 to 516 traverse the membrane as a helical; Anchor for type IV membrane protein segment; it reads PGLLKLFGLTTILSATALGFLAHKRGL. The Mitochondrial intermembrane segment spans residues 517-520; it reads FVHF.

This sequence belongs to the flavin monoamine oxidase family. As to quaternary structure, monomer, homo- or heterodimer (containing two subunits of similar size). Each subunit contains a covalently bound flavin. Enzymatically active as monomer. It depends on FAD as a cofactor.

The protein resides in the mitochondrion outer membrane. It carries out the reaction a secondary aliphatic amine + O2 + H2O = a primary amine + an aldehyde + H2O2. The enzyme catalyses (R)-adrenaline + O2 + H2O = (R)-3,4-dihydroxymandelaldehyde + methylamine + H2O2. It catalyses the reaction a primary methyl amine + O2 + H2O = an aldehyde + H2O2 + NH4(+). The catalysed reaction is benzylamine + O2 + H2O = benzaldehyde + H2O2 + NH4(+). It carries out the reaction dopamine + O2 + H2O = 3,4-dihydroxyphenylacetaldehyde + H2O2 + NH4(+). The enzyme catalyses tyramine + O2 + H2O = (4-hydroxyphenyl)acetaldehyde + H2O2 + NH4(+). It catalyses the reaction (R)-noradrenaline + O2 + H2O = (R)-3,4-dihydroxymandelaldehyde + H2O2 + NH4(+). The catalysed reaction is 2-phenylethylamine + O2 + H2O = 2-phenylacetaldehyde + H2O2 + NH4(+). It carries out the reaction N-acetylputrescine + O2 + H2O = 4-acetamidobutanal + H2O2 + NH4(+). Catalyzes the oxidative deamination of primary and some secondary amines such as neurotransmitters, and exogenous amines including the tertiary amine, neurotoxin 1-methyl-4-phenyl-1,2,3,6-tetrahydropyridine (MPTP), with concomitant reduction of oxygen to hydrogen peroxide and participates in the metabolism of neuroactive and vasoactive amines in the central nervous system and peripheral tissues. Preferentially degrades benzylamine and phenylethylamine. This chain is Amine oxidase [flavin-containing] B, found in Mus musculus (Mouse).